A 76-amino-acid polypeptide reads, in one-letter code: Putative defensin-like protein 121 (76 aa).

The first 26 residues, Met-1 to Gly-26, serve as a signal peptide directing secretion. 4 disulfide bridges follow: Cys-30–Cys-74, Cys-39–Cys-59, Cys-44–Cys-68, and Cys-48–Cys-70.

The protein belongs to the DEFL family.

It localises to the secreted. In Arabidopsis thaliana (Mouse-ear cress), this protein is Putative defensin-like protein 121 (LCR55).